The following is a 207-amino-acid chain: Ribosomal RNA large subunit methyltransferase E (207 aa).

Gly-60, Trp-62, Asp-80, Asp-96, and Asp-121 together coordinate S-adenosyl-L-methionine. Residue Lys-161 is the Proton acceptor of the active site.

This sequence belongs to the class I-like SAM-binding methyltransferase superfamily. RNA methyltransferase RlmE family.

The protein resides in the cytoplasm. It catalyses the reaction uridine(2552) in 23S rRNA + S-adenosyl-L-methionine = 2'-O-methyluridine(2552) in 23S rRNA + S-adenosyl-L-homocysteine + H(+). Specifically methylates the uridine in position 2552 of 23S rRNA at the 2'-O position of the ribose in the fully assembled 50S ribosomal subunit. The sequence is that of Ribosomal RNA large subunit methyltransferase E from Azotobacter vinelandii (strain DJ / ATCC BAA-1303).